The chain runs to 493 residues: 3-octaprenyl-4-hydroxybenzoate carboxy-lyase (493 aa).

Residue N172 coordinates Mn(2+). Prenylated FMN is bound by residues 175 to 177, 189 to 191, and 194 to 195; these read IYR, RWL, and RG. E238 lines the Mn(2+) pocket. Residue D287 is the Proton donor of the active site.

Belongs to the UbiD family. Homohexamer. It depends on prenylated FMN as a cofactor. The cofactor is Mn(2+).

The protein localises to the cell membrane. The enzyme catalyses a 4-hydroxy-3-(all-trans-polyprenyl)benzoate + H(+) = a 2-(all-trans-polyprenyl)phenol + CO2. Its pathway is cofactor biosynthesis; ubiquinone biosynthesis. In terms of biological role, catalyzes the decarboxylation of 3-octaprenyl-4-hydroxy benzoate to 2-octaprenylphenol, an intermediate step in ubiquinone biosynthesis. This is 3-octaprenyl-4-hydroxybenzoate carboxy-lyase from Shewanella sp. (strain MR-4).